Consider the following 273-residue polypeptide: Small ribosomal subunit protein eS1 (273 aa).

This sequence belongs to the eukaryotic ribosomal protein eS1 family. In terms of assembly, component of the small ribosomal subunit. Mature ribosomes consist of a small (40S) and a large (60S) subunit. The 40S subunit contains about 33 different proteins and 1 molecule of RNA (18S). The 60S subunit contains about 49 different proteins and 3 molecules of RNA (25S, 5.8S and 5S).

It localises to the cytoplasm. The chain is Small ribosomal subunit protein eS1 (rps3a) from Dictyostelium discoideum (Social amoeba).